Reading from the N-terminus, the 348-residue chain is Tocopherol O-methyltransferase, chloroplastic (348 aa).

The N-terminal 51 residues, 1–51, are a transit peptide targeting the chloroplast; sequence MKATLAAPSSLTSLPYRTNSSFGSKSSLLFRSPSSSSSVSMTTTRGNVAVA. Ala-52 carries the N-acetylalanine modification. Residues 130–139 are SAM motif I; it reads VVDVGCGIGG. The SAM motif II stretch occupies residues 193–201; sequence GKFDLVWSM. Residues 220 to 229 are SAM motif III; sequence VAAPGGRIII.

It belongs to the class I-like SAM-binding methyltransferase superfamily. gTMT family.

Its subcellular location is the plastid. It localises to the chloroplast. It catalyses the reaction gamma-tocopherol + S-adenosyl-L-methionine = (+)-alpha-tocopherol + S-adenosyl-L-homocysteine + H(+). It carries out the reaction delta-tocotrienol + S-adenosyl-L-methionine = beta-tocotrienol + S-adenosyl-L-homocysteine + H(+). The enzyme catalyses gamma-tocotrienol + S-adenosyl-L-methionine = alpha-tocotrienol + S-adenosyl-L-homocysteine + H(+). The catalysed reaction is delta-tocopherol + S-adenosyl-L-methionine = beta-tocopherol + S-adenosyl-L-homocysteine + H(+). Its pathway is cofactor biosynthesis; tocopherol biosynthesis. Functionally, involved in the synthesis of tocopherol (vitamin E). Methylates gamma- and delta-tocopherol to form beta- and alpha-tocopherol, respectively. The sequence is that of Tocopherol O-methyltransferase, chloroplastic (VTE4) from Arabidopsis thaliana (Mouse-ear cress).